Here is an 86-residue protein sequence, read N- to C-terminus: Cell division topological specificity factor (86 aa).

It belongs to the MinE family.

In terms of biological role, prevents the cell division inhibition by proteins MinC and MinD at internal division sites while permitting inhibition at polar sites. This ensures cell division at the proper site by restricting the formation of a division septum at the midpoint of the long axis of the cell. This chain is Cell division topological specificity factor, found in Shewanella sediminis (strain HAW-EB3).